Reading from the N-terminus, the 383-residue chain is Adaptive-response sensory kinase SasA (383 aa).

The 223-residue stretch at 161–383 (MLAHDLRSPL…SFHFTLPVYR (223 aa)) folds into the Histidine kinase domain. Position 164 is a phosphohistidine; by autocatalysis (H164).

In terms of assembly, homooligomerizes. Interacts with KaiC1. Interacts with KaiC1 and RpaA. Binds to the B-loop in the CI domain of KaiC; SasA and KaiB compete to bind to the CI domain.

It carries out the reaction ATP + protein L-histidine = ADP + protein N-phospho-L-histidine.. In terms of biological role, member of the two-component regulatory system SasA/RpaA involved in genome-wide circadian gene expression. One of several clock output pathways. Participates in the Kai clock protein complex, the main circadian regulator in cyanobacteria, via its interaction with KaiC. KaiC enhances the autophosphorylation activity of SasA, which then transfers its phosphate group to RpaA to activate it. In addition to its output function, recruits fold-shifted KaiB (KaiB(fs)) to KaiC to cooperatively form the KaiB(6):KaiC(6) complex (independent of SasA kinase activity). Required for robustness of the circadian rhythm of gene expression and is involved in clock output, also required for adaptation to light/dark cycles. Plays an important role in glucose metabolism, important for expression of genes involved in glycolysis, gluconeogenesis, the oxidative pentose phosphate pathway, and glycogen metabolism. Required for heterotrophic growth. Overexpression from the psbAII promoter leads to altered levels of genes involved in carbon metabolism, increased levels of transcripts for clock oscillator genes in the light and the dark, complete loss of glycogen accumulation, decreased levels of metabolites of sugar catabolism and increased levels of amino acids in the light and increased levels of SigE protein. The sequence is that of Adaptive-response sensory kinase SasA from Synechocystis sp. (strain ATCC 27184 / PCC 6803 / Kazusa).